Here is an 86-residue protein sequence, read N- to C-terminus: Weak neurotoxin 9 (86 aa).

The N-terminal stretch at 1 to 21 (MKTLLLTLVVVTIVCLDLGYT) is a signal peptide. Cystine bridges form between Cys24–Cys45, Cys27–Cys32, Cys38–Cys63, Cys67–Cys78, and Cys79–Cys84.

Belongs to the three-finger toxin family. Ancestral subfamily. Orphan group II sub-subfamily. Expressed by the venom gland.

Its subcellular location is the secreted. In terms of biological role, binds with low affinity to muscular (alpha-1-beta-1-delta-epsilon/CHRNA1-CHRNB1-CHRND-CHRNE) and very low affinity to neuronal (alpha-7/CHRNA7) nicotinic acetylcholine receptor (nAChR). This chain is Weak neurotoxin 9, found in Naja sputatrix (Malayan spitting cobra).